Consider the following 536-residue polypeptide: Chlorophyllide a oxygenase, chloroplastic (536 aa).

The N-terminal 36 residues, 1-36 (MNAAVFSPSALSLPISFSKTRSSFLSRKKGVKGEFR), are a transit peptide targeting the chloroplast. A coiled-coil region spans residues 123 to 150 (IGTVKKELAGLQEELSKAHQQVHISEAR). Residues 221-321 (WYPVAFTADL…CLEQEGMIWI (101 aa)) form the Rieske domain. [2Fe-2S] cluster is bound by residues Cys262, His264, Cys281, and His284. Residues Asp360, Asp364, His367, and His372 each coordinate Fe cation.

The protein resides in the plastid. Its subcellular location is the chloroplast membrane. The protein localises to the chloroplast thylakoid membrane. It catalyses the reaction chlorophyllide a + 2 NADPH + 2 O2 + 2 H(+) = chlorophyllide b + 2 NADP(+) + 3 H2O. The protein operates within porphyrin-containing compound metabolism; chlorophyll biosynthesis. Its function is as follows. Catalyzes a two-step oxygenase reaction involved in the synthesis of chlorophyll b. Acts specifically on the non-esterified chlorophyllide a and not on chlorophyll a. The polypeptide is Chlorophyllide a oxygenase, chloroplastic (CAO) (Arabidopsis thaliana (Mouse-ear cress)).